The chain runs to 177 residues: Endoribonuclease YbeY (177 aa).

Residues histidine 114, histidine 118, and histidine 124 each contribute to the Zn(2+) site. The interval 154–177 (SYPEAIPTNPAPRRQASSSAGHIE) is disordered. The span at 168 to 177 (QASSSAGHIE) shows a compositional bias: polar residues.

It belongs to the endoribonuclease YbeY family. Requires Zn(2+) as cofactor.

The protein resides in the cytoplasm. In terms of biological role, single strand-specific metallo-endoribonuclease involved in late-stage 70S ribosome quality control and in maturation of the 3' terminus of the 16S rRNA. This is Endoribonuclease YbeY from Cellvibrio japonicus (strain Ueda107) (Pseudomonas fluorescens subsp. cellulosa).